Reading from the N-terminus, the 259-residue chain is MANEEDFVGFGDTFKDPEGFYPPEKEPTFAEHQMLSGQTVRVRLVGSHPLYGDLLWNAGRTSATYIEEKASSLVEGKDVLEVGAAAGVPSIVSAVKGARTVVMTDYPDPDLVENMRYNASLSAAIIPSSSSLHVAGYKWGDPVEPLTAYLPEGSNSFDLLIMADVVYSYQEHPNLIKVMQKALKKSKDSVALVVFTPYQPWLLPRNQTFFPLAEQNGFQVTKIFEKVMDKVLFENDPGDELLRRTVFGYEIRWAPNQLN.

Residues Trp-56, 83 to 85, Asp-105, Trp-139, and Ala-163 contribute to the S-adenosyl-L-methionine site; that span reads GAA.

It belongs to the class I-like SAM-binding methyltransferase superfamily. EFM7 family.

Its subcellular location is the cytoplasm. Its function is as follows. S-adenosyl-L-methionine-dependent protein methyltransferase that trimethylates the N-terminal glycine 'Gly-2' of elongation factor 1-alpha, before also catalyzing the mono- and dimethylation of 'Lys-3'. This chain is Protein N-terminal and lysine N-methyltransferase efm7, found in Aspergillus fumigatus (strain ATCC MYA-4609 / CBS 101355 / FGSC A1100 / Af293) (Neosartorya fumigata).